Reading from the N-terminus, the 406-residue chain is Imidazolonepropionase (406 aa).

2 residues coordinate Fe(3+): histidine 65 and histidine 67. Zn(2+) is bound by residues histidine 65 and histidine 67. The 4-imidazolone-5-propanoate site is built by arginine 74, tyrosine 137, and histidine 170. Tyrosine 137 contacts N-formimidoyl-L-glutamate. Histidine 235 provides a ligand contact to Fe(3+). Histidine 235 is a binding site for Zn(2+). Residue glutamine 238 participates in 4-imidazolone-5-propanoate binding. Aspartate 310 provides a ligand contact to Fe(3+). Aspartate 310 serves as a coordination point for Zn(2+). 2 residues coordinate N-formimidoyl-L-glutamate: asparagine 312 and glycine 314. Residue threonine 315 participates in 4-imidazolone-5-propanoate binding.

The protein belongs to the metallo-dependent hydrolases superfamily. HutI family. Requires Zn(2+) as cofactor. The cofactor is Fe(3+).

Its subcellular location is the cytoplasm. The enzyme catalyses 4-imidazolone-5-propanoate + H2O = N-formimidoyl-L-glutamate. The protein operates within amino-acid degradation; L-histidine degradation into L-glutamate; N-formimidoyl-L-glutamate from L-histidine: step 3/3. Catalyzes the hydrolytic cleavage of the carbon-nitrogen bond in imidazolone-5-propanoate to yield N-formimidoyl-L-glutamate. It is the third step in the universal histidine degradation pathway. The chain is Imidazolonepropionase from Vibrio vulnificus (strain CMCP6).